Here is a 275-residue protein sequence, read N- to C-terminus: Large ribosomal subunit protein uL2 (275 aa).

Residues R221–K275 are disordered.

Belongs to the universal ribosomal protein uL2 family. In terms of assembly, part of the 50S ribosomal subunit. Forms a bridge to the 30S subunit in the 70S ribosome.

Its function is as follows. One of the primary rRNA binding proteins. Required for association of the 30S and 50S subunits to form the 70S ribosome, for tRNA binding and peptide bond formation. It has been suggested to have peptidyltransferase activity; this is somewhat controversial. Makes several contacts with the 16S rRNA in the 70S ribosome. The protein is Large ribosomal subunit protein uL2 of Kosmotoga olearia (strain ATCC BAA-1733 / DSM 21960 / TBF 19.5.1).